The chain runs to 684 residues: Probable Xaa-Pro aminopeptidase P (684 aa).

Mn(2+) contacts are provided by D481, D492, E590, and E604.

The protein belongs to the peptidase M24B family. Requires Mn(2+) as cofactor.

It catalyses the reaction Release of any N-terminal amino acid, including proline, that is linked to proline, even from a dipeptide or tripeptide.. Its function is as follows. Catalyzes the removal of a penultimate prolyl residue from the N-termini of peptides. The chain is Probable Xaa-Pro aminopeptidase P (ampp) from Neurospora crassa (strain ATCC 24698 / 74-OR23-1A / CBS 708.71 / DSM 1257 / FGSC 987).